The following is a 355-amino-acid chain: NAD-dependent protein deacylase sirtuin-6 (355 aa).

Ser2 is modified (N-acetylserine). Phosphoserine is present on Ser10. In terms of domain architecture, Deacetylase sirtuin-type spans Pro27–Glu272. The residue at position 33 (Lys33) is an N6-acetyllysine. The NAD(+) site is built by Ala53, Thr57, Phe64, Arg65, Trp71, Gln113, and His133. His133 functions as the Proton acceptor in the catalytic mechanism. Zn(2+)-binding residues include Cys141, Cys144, and Cys166. A Glycyl lysine isopeptide (Lys-Gly) (interchain with G-Cter in ubiquitin) cross-link involves residue Lys170. Cys177 is a binding site for Zn(2+). The NAD(+) site is built by Gly214, Ser216, Asn240, Gln242, and Val258. Residues Arg284–Ser355 are disordered. A compositionally biased stretch (pro residues) spans Pro287 to Lys296. The residue at position 294 (Thr294) is a Phosphothreonine. A phosphoserine mark is found at Ser303 and Ser330.

This sequence belongs to the sirtuin family. Class IV subfamily. In terms of assembly, homodimer; binds to nucleosomes and DNA ends as a homodimer. Interacts with RELA; interferes with RELA binding to target DNA. Interacts with SMARCA5; promoting recruitment of SMARCA5/SNF2H to double-strand breaks (DSBs) sites. Interacts with the mTORC2 complex; preventing the ability of SIRT6 to deacetylate FOXO1. Interacts with the CLOCK-BMAL1 complex; recruited by the CLOCK-BMAL1 complex to regulate expression of clock-controlled genes. Interacts with CSNK2A2; preventing CSNK2A2 localization to the nucleus. Post-translationally, acetylated at Lys-33. Deacetylation at Lys-33 by SIRT1 promotes homomultimerization and binding to double-strand breaks (DSBs) sites. In terms of processing, phosphorylation at Ser-10 by MAPK8/JNK1 in response to oxidative stress stimulates the mono-ADP-ribosyltransferase activity on PARP1, leading to PARP1 recruitment to double-strand breaks (DSBs). Monoubiquitinated at Lys-170 by STUB1/CHIP, preventing its degradation by the proteasome. Post-translationally, sumoylated, leading to specifically decrease ability to deacetylate histone H3 at 'Lys-56' (H3K56ac).

It is found in the nucleus. It localises to the chromosome. Its subcellular location is the telomere. The protein localises to the endoplasmic reticulum. The catalysed reaction is N(6)-acetyl-L-lysyl-[protein] + NAD(+) + H2O = 2''-O-acetyl-ADP-D-ribose + nicotinamide + L-lysyl-[protein]. It catalyses the reaction N(6)-tetradecanoyl-L-lysyl-[protein] + NAD(+) + H2O = 2''-O-tetradecanoyl-ADP-D-ribose + nicotinamide + L-lysyl-[protein]. The enzyme catalyses N(6)-hexadecanoyl-L-lysyl-[protein] + NAD(+) + H2O = 2''-O-hexadecanoyl-ADP-D-ribose + nicotinamide + L-lysyl-[protein]. It carries out the reaction L-lysyl-[protein] + NAD(+) = N(6)-(ADP-D-ribosyl)-L-lysyl-[protein] + nicotinamide + H(+). The catalysed reaction is L-arginyl-[protein] + NAD(+) = N(omega)-(ADP-D-ribosyl)-L-arginyl-[protein] + nicotinamide + H(+). Its activity is regulated as follows. Compared to the defatty-acylase activity, the protein deacetylase activity is weak in vitro, and requires activation. The histone deacetylase activity is strongly activated upon binding to nucleosomes and chromatin in vivo. Two molecules of SIRT6 associate with the acidic patch of one nucleosome, while the C-terminal disordered region of SIRT6 associates with nucleosomal DNA, leading to efficient histone deacetylation. The protein-lysine deacetylase activity is also activated by long-chain free fatty-acids. Its function is as follows. NAD-dependent protein deacetylase, deacylase and mono-ADP-ribosyltransferase that plays an essential role in DNA damage repair, telomere maintenance, metabolic homeostasis, inflammation, tumorigenesis and aging. Displays protein-lysine deacetylase or defatty-acylase (demyristoylase and depalmitoylase) activity, depending on the context. Acts as a key histone deacetylase by catalyzing deacetylation of histone H3 at 'Lys-9', 'Lys-18' and 'Lys-56' (H3K9ac, H3K18ac and H3K56ac, respectively), suppressing target gene expression of several transcription factors, including NF-kappa-B. Acts as an inhibitor of transcription elongation by mediating deacetylation of H3K9ac and H3K56ac, preventing release of NELFE from chromatin and causing transcriptional pausing. Involved in DNA repair by promoting double-strand break (DSB) repair: acts as a DSB sensor by recognizing and binding DSB sites, leading to (1) recruitment of DNA repair proteins, such as SMARCA5/SNF2H, and (2) deacetylation of histone H3K9ac and H3K56ac. SIRT6 participation to DSB repair is probably involved in extension of life span. Also promotes DNA repair by deacetylating non-histone proteins, such as DDB2 and p53/TP53. Specifically deacetylates H3K18ac at pericentric heterochromatin, thereby maintaining pericentric heterochromatin silencing at centromeres and protecting against genomic instability and cellular senescence. Involved in telomere maintenance by catalyzing deacetylation of histone H3 in telomeric chromatin, regulating telomere position effect and telomere movement in response to DNA damage. Required for embryonic stem cell differentiation by mediating histone deacetylation of H3K9ac. Plays a major role in metabolism by regulating processes such as glycolysis, gluconeogenesis, insulin secretion and lipid metabolism. Inhibits glycolysis via histone deacetylase activity and by acting as a corepressor of the transcription factor HIF1A, thereby controlling the expression of multiple glycolytic genes. Has tumor suppressor activity by repressing glycolysis, thereby inhibiting the Warburg effect. Also regulates glycolysis and tumorigenesis by mediating deacetylation and nuclear export of non-histone proteins, such as isoform M2 of PKM (PKM2). Acts as a negative regulator of gluconeogenesis by mediating deacetylation of non-histone proteins, such as FOXO1 and KAT2A/GCN5. Promotes beta-oxidation of fatty acids during fasting by catalyzing deacetylation of NCOA2, inducing coactivation of PPARA. Acts as a regulator of lipid catabolism in brown adipocytes, both by catalyzing deacetylation of histones and non-histone proteins, such as FOXO1. Also acts as a regulator of circadian rhythms, both by regulating expression of clock-controlled genes involved in lipid and carbohydrate metabolism, and by catalyzing deacetylation of PER2. The defatty-acylase activity is specifically involved in regulation of protein secretion. Has high activity toward long-chain fatty acyl groups and mediates protein-lysine demyristoylation and depalmitoylation of target proteins, such as RRAS2 and TNF, thereby regulating their secretion. Also acts as a mono-ADP-ribosyltransferase by mediating mono-ADP-ribosylation of PARP1, TRIM28/KAP1 or SMARCC2/BAF170. Mono-ADP-ribosyltransferase activity is involved in DNA repair, cellular senescence, repression of LINE-1 retrotransposon elements and regulation of transcription. The protein is NAD-dependent protein deacylase sirtuin-6 of Macaca fascicularis (Crab-eating macaque).